A 900-amino-acid chain; its full sequence is Sterol regulatory element-binding protein 1 (900 aa).

Low complexity predominate over residues 1-16 (MQSSIPSVSVSVASPA). Disordered stretches follow at residues 1 to 49 (MQSS…TKAS) and 206 to 263 (TTCK…PKKT). The segment at 1–440 (MQSSIPSVSV…FALPPFLMSP (440 aa)) is nuclear form of sre1; complements deletions of sre1 or scp1. Residues 1–442 (MQSSIPSVSV…LPPFLMSPFT (442 aa)) are Cytoplasmic-facing. Polar residues predominate over residues 21 to 32 (TKASPDSKSPNS). Positions 35–49 (AIPSSSPLASSTKAS) are enriched in low complexity. A bHLH domain is found at 260 to 332 (PKKTAHNMIE…AKATEYIRHL (73 aa)). A helical transmembrane segment spans residues 443 to 463 (GTVLFNMLKIGVVLLGLFYLL). At 464–509 (HDNSLFKGFKGEKKSKVSTRSSMSPSSILFRKTVFEKYCLLDHSTS) the chain is on the lumenal side. The chain crosses the membrane as a helical span at residues 510-530 (TISLFFGLLIFTLKSAYGYLT). Topologically, residues 531–900 (HRLSALYTSS…QEDLGYVSSA (370 aa)) are cytoplasmic. 2 positions are modified to phosphoserine: Ser898 and Ser899.

In terms of assembly, forms a tight complex with scp1, composed of 4 copies of scp1 and 4 copies of sre1, which protects sre1 precursor from degradation by the proteasome. In terms of processing, in low oxygen or sterol conditions, undergoes proteolytic cleavage by rhomboid-type protease rbd2 and is released as soluble transcription factor from the membrane. Post-translationally, processed form is phosphorylated.

It localises to the endoplasmic reticulum membrane. Its subcellular location is the nucleus. In terms of biological role, precursor of the transcription factor form (Processed sterol regulatory element-binding protein 1), which is embedded in the endoplasmic reticulum membrane. Low oxygen or sterol conditions promote processing of this form, releasing the transcription factor form that translocates into the nucleus and activates transcription of genes required for adaptation to anaerobic growth. Transcriptional activator required for transcription of genes required for adaptation to anaerobic growth like those implicated in the nonrespiratory oxygen-consumptive biosynthetic pathways of sterol, heme, sphingolipid, and ubiquinone biosynthesis. May monitor oxygen levels through sterol synthesis steps which require oxygen. The protein is Sterol regulatory element-binding protein 1 of Schizosaccharomyces pombe (strain 972 / ATCC 24843) (Fission yeast).